A 255-amino-acid polypeptide reads, in one-letter code: Sulfur carrier protein FdhD (255 aa).

Cys103 functions as the Cysteine persulfide intermediate in the catalytic mechanism.

This sequence belongs to the FdhD family.

Its subcellular location is the cytoplasm. Functionally, required for formate dehydrogenase (FDH) activity. Acts as a sulfur carrier protein that transfers sulfur from IscS to the molybdenum cofactor prior to its insertion into FDH. The polypeptide is Sulfur carrier protein FdhD (Sulfurisphaera tokodaii (strain DSM 16993 / JCM 10545 / NBRC 100140 / 7) (Sulfolobus tokodaii)).